The primary structure comprises 860 residues: DNA mismatch repair protein MutS (860 aa).

Residue 618 to 625 (GPNMGGKS) coordinates ATP.

The protein belongs to the DNA mismatch repair MutS family.

Its function is as follows. This protein is involved in the repair of mismatches in DNA. It is possible that it carries out the mismatch recognition step. This protein has a weak ATPase activity. The chain is DNA mismatch repair protein MutS from Shewanella piezotolerans (strain WP3 / JCM 13877).